A 419-amino-acid polypeptide reads, in one-letter code: Serine hydroxymethyltransferase (419 aa).

(6S)-5,6,7,8-tetrahydrofolate is bound by residues Leu-121 and 125-127 (GHL). Lys-230 carries the N6-(pyridoxal phosphate)lysine modification. (6S)-5,6,7,8-tetrahydrofolate is bound at residue 355–357 (SPF).

This sequence belongs to the SHMT family. As to quaternary structure, homodimer. Pyridoxal 5'-phosphate serves as cofactor.

The protein resides in the cytoplasm. It catalyses the reaction (6R)-5,10-methylene-5,6,7,8-tetrahydrofolate + glycine + H2O = (6S)-5,6,7,8-tetrahydrofolate + L-serine. It participates in one-carbon metabolism; tetrahydrofolate interconversion. The protein operates within amino-acid biosynthesis; glycine biosynthesis; glycine from L-serine: step 1/1. Functionally, catalyzes the reversible interconversion of serine and glycine with tetrahydrofolate (THF) serving as the one-carbon carrier. This reaction serves as the major source of one-carbon groups required for the biosynthesis of purines, thymidylate, methionine, and other important biomolecules. Also exhibits THF-independent aldolase activity toward beta-hydroxyamino acids, producing glycine and aldehydes, via a retro-aldol mechanism. This is Serine hydroxymethyltransferase from Streptococcus uberis (strain ATCC BAA-854 / 0140J).